We begin with the raw amino-acid sequence, 643 residues long: Enzymatic polyprotein (643 aa).

One can recognise a Peptidase A3A domain in the interval N6–P209. D26 functions as the For protease activity in the catalytic mechanism. Residues V226–L410 form the Reverse transcriptase domain. Residues D296, D360, and D361 each contribute to the Mg(2+) site.

The protein belongs to the caulimoviridae enzymatic polyprotein family.

The catalysed reaction is DNA(n) + a 2'-deoxyribonucleoside 5'-triphosphate = DNA(n+1) + diphosphate. Functionally, encodes for at least two polypeptides: protease (PR) and reverse transcriptase (RT). The protease processes the polyprotein in cis. Reverse transcriptase is multifunctional enzyme that converts the viral RNA genome into dsDNA in viral cytoplasmic capsids. This enzyme displays a DNA polymerase activity that can copy either DNA or RNA templates, and a ribonuclease H (RNase H) activity that cleaves the RNA strand of RNA-DNA heteroduplexes in a partially processive 3'- to 5'-endonucleasic mode. Neo-synthesized pregenomic RNA (pgRNA) are encapsidated, and reverse-transcribed inside the nucleocapsid. Partial (+)DNA is synthesized from the (-)DNA template and generates the relaxed circular DNA (RC-DNA) genome. After budding and infection, the RC-DNA migrates in the nucleus, and is converted into a plasmid-like covalently closed circular DNA (cccDNA). In Cestrum parqui (CmYLCV), this protein is Enzymatic polyprotein.